Reading from the N-terminus, the 349-residue chain is UDP-3-O-acylglucosamine N-acyltransferase (349 aa).

The Proton acceptor role is filled by His-248.

It belongs to the transferase hexapeptide repeat family. LpxD subfamily. In terms of assembly, homotrimer.

It carries out the reaction a UDP-3-O-[(3R)-3-hydroxyacyl]-alpha-D-glucosamine + a (3R)-hydroxyacyl-[ACP] = a UDP-2-N,3-O-bis[(3R)-3-hydroxyacyl]-alpha-D-glucosamine + holo-[ACP] + H(+). Its pathway is bacterial outer membrane biogenesis; LPS lipid A biosynthesis. Its function is as follows. Catalyzes the N-acylation of UDP-3-O-acylglucosamine using 3-hydroxyacyl-ACP as the acyl donor. Is involved in the biosynthesis of lipid A, a phosphorylated glycolipid that anchors the lipopolysaccharide to the outer membrane of the cell. The chain is UDP-3-O-acylglucosamine N-acyltransferase from Colwellia psychrerythraea (strain 34H / ATCC BAA-681) (Vibrio psychroerythus).